The chain runs to 126 residues: Holo-[acyl-carrier-protein] synthase (126 aa).

Residues aspartate 9 and glutamate 58 each contribute to the Mg(2+) site.

It belongs to the P-Pant transferase superfamily. AcpS family. It depends on Mg(2+) as a cofactor.

The protein localises to the cytoplasm. The catalysed reaction is apo-[ACP] + CoA = holo-[ACP] + adenosine 3',5'-bisphosphate + H(+). Transfers the 4'-phosphopantetheine moiety from coenzyme A to a Ser of acyl-carrier-protein. The protein is Holo-[acyl-carrier-protein] synthase of Vibrio vulnificus (strain CMCP6).